The sequence spans 167 residues: MLSKEVVKLLNEQINKEMYAANLYLSMSSWCYENSLDGAGAFLFAHASEESDHAKKLITYLNETDSHVELQEVKQPEQNFKSLLDVFEKTYEHEQFITKSINTLVEHMLTHKDYSTFNFLQWYVSEQHEEEALFRGIVDKIKLIGEHGNGLYLADQYIKNIALSRKK.

One can recognise a Ferritin-like diiron domain in the interval M1–G145. Fe cation-binding residues include E17, E50, H53, E94, and Q127.

It belongs to the ferritin family. Prokaryotic subfamily. Homooligomer of 24 subunits that assemble into a spherical protein shell (12 +/- 1 nM diameter) that can sequester at least 2000 iron atoms.

The protein localises to the cytoplasm. It catalyses the reaction 4 Fe(2+) + O2 + 6 H2O = 4 iron(III) oxide-hydroxide + 12 H(+). Iron-storage protein. The polypeptide is Bacterial non-heme ferritin (ftn) (Campylobacter jejuni subsp. jejuni serotype O:2 (strain ATCC 700819 / NCTC 11168)).